The chain runs to 613 residues: AP-5 complex subunit mu (613 aa).

Positions 309-563 constitute an MHD domain; that stretch reads KQRLLFTIHE…DYAKVSFKIV (255 aa). The interval 501–522 is disordered; the sequence is SPLQSRRKGDGDDEESEDESAE. Over residues 511-521 the composition is skewed to acidic residues; it reads GDDEESEDESA.

The protein belongs to the adaptor complexes medium subunit family. Probably part of the adaptor protein complex 5 (AP-5).

The protein localises to the cytoplasmic vesicle membrane. This chain is AP-5 complex subunit mu (AP5M), found in Arabidopsis thaliana (Mouse-ear cress).